Consider the following 931-residue polypeptide: Histone-lysine N-methyltransferase EZ1 (931 aa).

Positions 1–30 are enriched in low complexity; it reads MEAEAAAAVVASSASASASAGRSRPSSSAA. Disordered regions lie at residues 1–37, 372–450, and 491–549; these read MEAE…SNSA, PTHS…ITNR, and RNGN…YDSS. Residues 375-385 show a composition bias toward polar residues; the sequence is SSDNVMNQPGS. Positions 386–398 are enriched in basic residues; it reads NRKKNGSSGRKTK. A compositionally biased stretch (polar residues) spans 423 to 433; the sequence is SNKSPQHSPSP. A compositionally biased stretch (low complexity) spans 500–509; it reads SSQQSSPSTR. Positions 528-549 are enriched in basic and acidic residues; it reads AHNDSTEEANNRHSATDGYDSS. The 51-residue stretch at 565–615 folds into the SANT domain; the sequence is YLRSWKAIEQGLLVKGLEIFGRNSCLIARNLLGGMKTCKDVFQYMNYIENN. Positions 664–763 constitute a CXC domain; it reads FKRITERKDQ…TLGVPNQRGD (100 aa). The region spanning 778 to 893 is the SET domain; that stretch reads QRVLLGRSDV…AGEELFYDYR (116 aa). Basic and acidic residues predominate over residues 903–915; sequence ARKPEASGAKDDG. Residues 903-931 form a disordered region; the sequence is ARKPEASGAKDDGQPFNGRAKKLAQNNRG.

This sequence belongs to the class V-like SAM-binding methyltransferase superfamily. Histone-lysine methyltransferase family. EZ subfamily. As to expression, widely expressed.

Its subcellular location is the nucleus. It catalyses the reaction L-lysyl(27)-[histone H3] + 3 S-adenosyl-L-methionine = N(6),N(6),N(6)-trimethyl-L-lysyl(27)-[histone H3] + 3 S-adenosyl-L-homocysteine + 3 H(+). In terms of biological role, polycomb group (PcG) protein. Catalytic subunit of some PcG multiprotein complex, which methylates 'Lys-27' of histone H3, leading to transcriptional repression of the affected target genes. PcG proteins are not required to initiate repression, but to maintain it during later stages of development. This is Histone-lysine N-methyltransferase EZ1 (EZ1) from Zea mays (Maize).